Here is a 416-residue protein sequence, read N- to C-terminus: MPRQLSAAAALFASLAVILHDGSQMRAKAFPETRDYSQPTAAATVQDIKKPVQQPAKQAPHQTLAARFMDGHITFQTAATVKIPTTTPATTKNTATTSPITYTLVTTQATPNNSHTAPPVTEVTVGPSLAPYSLPPTITPPAHTTGTSSSTVSHTTGNTTQPSNQTTLPATLSIALHKSTTGQKPVQPTHAPGTTAAAHNTTRTAAPASTVPGPTLAPQPSSVKTGIYQVLNGSRLCIKAEMGIQLIVQDKESVFSPRRYFNIDPNATQASGNCGTRKSNLLLNFQGGFVNLTFTKDEESYYISEVGAYLTVSDPETIYQGIKHAVVMFQTAVGHSFKCVSEQSLQLSAHLQVKTTDVQLQAFDFEDDHFGNVDECSSDYTIVLPVIGAIVVGLCLMGMGVYKIRLRCQSSGYQRI.

Positions 1–27 (MPRQLSAAAALFASLAVILHDGSQMRA) are cleaved as a signal peptide. Topologically, residues 28-381 (KAFPETRDYS…NVDECSSDYT (354 aa)) are lumenal. N-linked (GlcNAc...) asparagine glycans are attached at residues N112, N158, N164, N200, N232, N266, and N291. Disordered stretches follow at residues 136-167 (PTIT…NQTT) and 179-219 (STTG…LAPQ). A compositionally biased stretch (low complexity) spans 143 to 160 (HTTGTSSSTVSHTTGNTT). A compositionally biased stretch (low complexity) spans 188–208 (PTHAPGTTAAAHNTTRTAAPA). C237 and C274 form a disulfide bridge. C339 and C376 form a disulfide bridge. A helical membrane pass occupies residues 382 to 402 (IVLPVIGAIVVGLCLMGMGVY). Topologically, residues 403–416 (KIRLRCQSSGYQRI) are cytoplasmic.

The protein belongs to the LAMP family. As to quaternary structure, monomer. Interacts with FURIN. In terms of assembly, (Microbial infection) Interacts with mumps virus protein F; this interaction promotes protein F cleavage by FURIN. In terms of tissue distribution, detected in tonsil interdigitating dendritic cells, in spleen, lymph node, Peyer's patches in the small instestine, in thymus medulla and in B-cells (at protein level). Expressed in lymphoid organs and dendritic cells. Expressed in lung. Up-regulated in carcinomas of the esophagus, colon, rectum, ureter, stomach, breast, fallopian tube, thyroid and parotid tissues.

It localises to the cell surface. The protein localises to the lysosome membrane. It is found in the cytoplasmic vesicle membrane. Its subcellular location is the early endosome membrane. Lysosomal membrane glycoprotein which plays a role in the unfolded protein response (UPR) that contributes to protein degradation and cell survival during proteasomal dysfunction. Plays a role in the process of fusion of the lysosome with the autophagosome, thereby modulating the autophagic process. Promotes hepatocellular lipogenesis through activation of the PI3K/Akt pathway. May also play a role in dendritic cell function and in adaptive immunity. Its function is as follows. (Microbial infection) Plays a positive role in post-entry steps of influenza A virus replication, either virus uncoating, cytosolic transport, or nuclear import of viral components, and promotes nuclear accumulation of influenza nucleoprotein/NP at early stages of viral infection. In terms of biological role, (Microbial infection) Supports the FURIN-mediated cleavage of mumps virus fusion protein F by interacting with both FURIN and the unprocessed form but not the processed form of the viral protein F. Functionally, (Microbial infection) Promotes the intracellular proliferation of Salmonella typhimuium. This chain is Lysosome-associated membrane glycoprotein 3 (LAMP3), found in Homo sapiens (Human).